A 457-amino-acid chain; its full sequence is Gustatory and odorant receptor 24 (457 aa).

Residues 1-115 lie on the Cytoplasmic side of the membrane; it reads MSLYFNADTM…GGTAFVLASP (115 aa). The helical transmembrane segment at 116–136 threads the bilayer; sequence SMTYCVLFFLLLTVYIAFILL. The Extracellular segment spans residues 137-152; it reads NRIEIVRTLEGRFEES. The helical transmembrane segment at 153–173 threads the bilayer; that stretch reads VIAYLFIVNILPILIIPLMWY. Residues 174-209 are Cytoplasmic-facing; the sequence is ESRKVVSVVNGWVDFETVYRETTGRALELRLRTKAQ. Residues 210-230 form a helical membrane-spanning segment; the sequence is VIAILLPILCSLSVAITHVTM. The Extracellular segment spans residues 231-237; that stretch reads VDFKLLQ. A helical membrane pass occupies residues 238-258; it reads VIPYCVLDTITYMMGGYWYMA. Topologically, residues 259–309 are cytoplasmic; that stretch reads CETLSITAKILAEDFQRALRHVGPAAKVSEYRSLWLRLSKLARDTGFSTCY. The helical transmembrane segment at 310-330 threads the bilayer; sequence TFTFICLYLFFIITLSIYGLM. The Extracellular portion of the chain corresponds to 331–341; it reads SQISDGFGVKD. The helical transmembrane segment at 342–362 threads the bilayer; that stretch reads IGLAVTAFCSVGLLFYICDEA. The Cytoplasmic segment spans residues 363-421; sequence HYASFNVRTNFQKKLLMVELSWMNTDAQTEINMFLRATEMNPSSINLGGFFDVNRTLFK. A helical transmembrane segment spans residues 422–442; that stretch reads SLLATMVTYLVVLLQFQISIP. Over 443-457 the chain is Extracellular; sequence DEPSAMLMHSNSSHS. A glycan (N-linked (GlcNAc...) asparagine) is linked at asparagine 453.

It belongs to the insect chemoreceptor superfamily. Gustatory receptor (GR) family. Gr21a subfamily. As to expression, carbon dioxide-responsive neurons coexpress GPRgr22 and GPRgr24 in the maxillary palp, at both larval and adult life stages.

It localises to the cell membrane. Its function is as follows. Gustatory receptor which mediates acceptance or avoidance behavior, depending on its substrates. GPRgr22 and GPRgr24 together are sufficient for olfactory carbon dioxide-chemosensation. The polypeptide is Gustatory and odorant receptor 24 (Anopheles gambiae (African malaria mosquito)).